Here is a 357-residue protein sequence, read N- to C-terminus: Glutamine synthetase (357 aa).

Positions 25–104 (VMAEYIWIDA…VLCETWDSDG (80 aa)) constitute a GS beta-grasp domain. One can recognise a GS catalytic domain in the interval 111–357 (YRHDCARLME…IIAETLCGGL (247 aa)).

Belongs to the glutamine synthetase family. Homooctamer.

It is found in the cytoplasm. The catalysed reaction is L-glutamate + NH4(+) + ATP = L-glutamine + ADP + phosphate + H(+). This chain is Glutamine synthetase (glnA), found in Emericella nidulans (strain FGSC A4 / ATCC 38163 / CBS 112.46 / NRRL 194 / M139) (Aspergillus nidulans).